The sequence spans 339 residues: Methylthioribose-1-phosphate isomerase (339 aa).

Residues R52–A54, R89, and Q188 each bind substrate. D229 functions as the Proton donor in the catalytic mechanism. N239 to K240 lines the substrate pocket.

It belongs to the eIF-2B alpha/beta/delta subunits family. MtnA subfamily.

The catalysed reaction is 5-(methylsulfanyl)-alpha-D-ribose 1-phosphate = 5-(methylsulfanyl)-D-ribulose 1-phosphate. It participates in amino-acid biosynthesis; L-methionine biosynthesis via salvage pathway; L-methionine from S-methyl-5-thio-alpha-D-ribose 1-phosphate: step 1/6. Catalyzes the interconversion of methylthioribose-1-phosphate (MTR-1-P) into methylthioribulose-1-phosphate (MTRu-1-P). The protein is Methylthioribose-1-phosphate isomerase of Anaeromyxobacter sp. (strain K).